Consider the following 277-residue polypeptide: Large ribosomal subunit protein uL2 (277 aa).

2 disordered regions span residues 37-60 (KNSTAGRNNNGHITTRHKGGGHKH) and 223-264 (VVMN…NKRT). Over residues 39 to 49 (STAGRNNNGHI) the composition is skewed to polar residues. Residues 50–60 (TTRHKGGGHKH) show a composition bias toward basic residues. The segment covering 229–244 (DHPHGGGEGRTGEARE) has biased composition (basic and acidic residues).

The protein belongs to the universal ribosomal protein uL2 family. In terms of assembly, part of the 50S ribosomal subunit. Forms a bridge to the 30S subunit in the 70S ribosome.

One of the primary rRNA binding proteins. Required for association of the 30S and 50S subunits to form the 70S ribosome, for tRNA binding and peptide bond formation. It has been suggested to have peptidyltransferase activity; this is somewhat controversial. Makes several contacts with the 16S rRNA in the 70S ribosome. In Neisseria meningitidis serogroup B (strain ATCC BAA-335 / MC58), this protein is Large ribosomal subunit protein uL2.